Consider the following 621-residue polypeptide: (-)-beta-phellandrene synthase 1, chloroplastic (621 aa).

Residues 1–49 (MALALVSVAPLVSMRRSLFSSPYELKSIDKTIPNLVMCRKRMLGRPSIR) constitute a chloroplast transit peptide. Residues aspartate 372, aspartate 376, and aspartate 524 each contribute to the Mg(2+) site. A DDXXD motif motif is present at residues 372 to 376 (DDIYD).

The protein belongs to the terpene synthase family. Tpsd subfamily. It depends on Mg(2+) as a cofactor. The cofactor is Mn(2+).

The protein resides in the plastid. It is found in the chloroplast. The enzyme catalyses (2E)-geranyl diphosphate = (-)-beta-phellandrene + diphosphate. The protein operates within terpene metabolism; oleoresin biosynthesis. It participates in secondary metabolite biosynthesis; terpenoid biosynthesis. Its function is as follows. Monoterpene synthase (TPS) involved in the biosynthesis of monoterpene natural products included in conifer oleoresin secretions and volatile emissions; these compounds contribute to biotic and abiotic stress defense against herbivores and pathogens. Catalyzes the conversion of (2E)-geranyl diphosphate (GPP) to (-)-beta-phellandrene. This is (-)-beta-phellandrene synthase 1, chloroplastic from Pinus banksiana (Jack pine).